Here is a 496-residue protein sequence, read N- to C-terminus: Probable malate:quinone oxidoreductase (496 aa).

It belongs to the MQO family. Requires FAD as cofactor.

It catalyses the reaction (S)-malate + a quinone = a quinol + oxaloacetate. It functions in the pathway carbohydrate metabolism; tricarboxylic acid cycle; oxaloacetate from (S)-malate (quinone route): step 1/1. In Flavobacterium psychrophilum (strain ATCC 49511 / DSM 21280 / CIP 103535 / JIP02/86), this protein is Probable malate:quinone oxidoreductase.